Reading from the N-terminus, the 430-residue chain is Tektin-2 (430 aa).

2 coiled-coil regions span residues 75 to 162 (KEML…FQHL) and 226 to 380 (KNRA…IACK).

This sequence belongs to the tektin family. In terms of assembly, microtubule inner protein component of sperm flagellar doublet microtubules. May interact with CCDC172. Post-translationally, tyrosine phosphorylated. Ubiquitinated, leading to its degradation. Deubiquitinated by USP16, promoting its stability.

It localises to the cytoplasm. It is found in the cytoskeleton. Its subcellular location is the cilium axoneme. The protein resides in the flagellum axoneme. The protein localises to the microtubule organizing center. Microtubule inner protein (MIP) part of the dynein-decorated doublet microtubules (DMTs) in cilia and flagellar axoneme. Plays a key role in the assembly or attachment of the inner dynein arm to microtubules in sperm flagella and tracheal cilia. Forms filamentous polymers in the walls of ciliary and flagellar microtubules. The polypeptide is Tektin-2 (Tekt2) (Rattus norvegicus (Rat)).